The sequence spans 210 residues: Dof zinc finger protein DOF4.4 (210 aa).

Residues 24–78 (RVCPRCDSDNTKFCFYNNYSESQPRYFCKNCRRYWTHGGALRNIPVGGSCRKPKR) form a Dof-type zinc finger. Zn(2+) contacts are provided by Cys26, Cys29, Cys51, and Cys54.

Its subcellular location is the nucleus. Functionally, transcription factor that binds specifically to a 5'-AA[AG]G-3' consensus core sequence. This Arabidopsis thaliana (Mouse-ear cress) protein is Dof zinc finger protein DOF4.4 (DOF4.4).